A 115-amino-acid polypeptide reads, in one-letter code: Large ribosomal subunit protein bL19 (115 aa).

The protein belongs to the bacterial ribosomal protein bL19 family.

Its function is as follows. This protein is located at the 30S-50S ribosomal subunit interface and may play a role in the structure and function of the aminoacyl-tRNA binding site. In Streptococcus suis (strain 98HAH33), this protein is Large ribosomal subunit protein bL19.